The primary structure comprises 305 residues: D-alanine--D-alanine ligase (305 aa).

The 196-residue stretch at 105-300 folds into the ATP-grasp domain; that stretch reads KMIWQAAGIN…FDELVVQILE (196 aa). 131 to 186 contacts ATP; that stretch reads ADRLGLPLIIKPAREGSTLGLNKVDNEQDFRSAYQAAAEYDSLVLAEQFIQGIELT. Asp-254, Glu-267, and Asn-269 together coordinate Mg(2+).

Belongs to the D-alanine--D-alanine ligase family. The cofactor is Mg(2+). Requires Mn(2+) as cofactor.

The protein resides in the cytoplasm. The catalysed reaction is 2 D-alanine + ATP = D-alanyl-D-alanine + ADP + phosphate + H(+). It functions in the pathway cell wall biogenesis; peptidoglycan biosynthesis. Functionally, cell wall formation. This is D-alanine--D-alanine ligase from Nitrosomonas europaea (strain ATCC 19718 / CIP 103999 / KCTC 2705 / NBRC 14298).